Here is a 269-residue protein sequence, read N- to C-terminus: Small ribosomal subunit protein uS2 (269 aa).

The segment at 228-269 (QLDSDDDYEEFDESLAEGDYDDYDEEEDEDSETVSSQEGEEE) is disordered. Over residues 230–269 (DSDDDYEEFDESLAEGDYDDYDEEEDEDSETVSSQEGEEE) the composition is skewed to acidic residues.

It belongs to the universal ribosomal protein uS2 family.

The protein is Small ribosomal subunit protein uS2 of Crocosphaera subtropica (strain ATCC 51142 / BH68) (Cyanothece sp. (strain ATCC 51142)).